Reading from the N-terminus, the 156-residue chain is Arginine repressor (156 aa).

This sequence belongs to the ArgR family.

It localises to the cytoplasm. The protein operates within amino-acid biosynthesis; L-arginine biosynthesis [regulation]. Regulates arginine biosynthesis genes. The polypeptide is Arginine repressor (Erwinia tasmaniensis (strain DSM 17950 / CFBP 7177 / CIP 109463 / NCPPB 4357 / Et1/99)).